We begin with the raw amino-acid sequence, 1130 residues long: DNA-directed RNA polymerase I subunit rpa2 (1130 aa).

The C4-type zinc finger occupies 1070 to 1096 (CKLCGSTLTIYSKKDYSNQTVSECKSC).

This sequence belongs to the RNA polymerase beta chain family. In terms of assembly, component of the RNA polymerase I (Pol I) complex consisting of 14 subunits.

The protein localises to the nucleus. It localises to the nucleolus. The catalysed reaction is RNA(n) + a ribonucleoside 5'-triphosphate = RNA(n+1) + diphosphate. Functionally, DNA-dependent RNA polymerase catalyzes the transcription of DNA into RNA using the four ribonucleoside triphosphates as substrates. Second largest core component of RNA polymerase I which synthesizes ribosomal RNA precursors. Proposed to contribute to the polymerase catalytic activity and forms the polymerase active center together with the largest subunit. Pol I is composed of mobile elements and RPA2 is part of the core element with the central large cleft and probably a clamp element that moves to open and close the cleft. This chain is DNA-directed RNA polymerase I subunit rpa2 (polr1b), found in Dictyostelium discoideum (Social amoeba).